The sequence spans 337 residues: tRNA N6-adenosine threonylcarbamoyltransferase (337 aa).

Fe cation-binding residues include His111 and His115. Substrate-binding positions include 134–138, Asp167, Gly180, and Asn272; that span reads LVSGG. Asp300 lines the Fe cation pocket.

It belongs to the KAE1 / TsaD family. Fe(2+) is required as a cofactor.

It is found in the cytoplasm. It carries out the reaction L-threonylcarbamoyladenylate + adenosine(37) in tRNA = N(6)-L-threonylcarbamoyladenosine(37) in tRNA + AMP + H(+). In terms of biological role, required for the formation of a threonylcarbamoyl group on adenosine at position 37 (t(6)A37) in tRNAs that read codons beginning with adenine. Is involved in the transfer of the threonylcarbamoyl moiety of threonylcarbamoyl-AMP (TC-AMP) to the N6 group of A37, together with TsaE and TsaB. TsaD likely plays a direct catalytic role in this reaction. The protein is tRNA N6-adenosine threonylcarbamoyltransferase of Methylococcus capsulatus (strain ATCC 33009 / NCIMB 11132 / Bath).